Reading from the N-terminus, the 245-residue chain is 1-(5-phosphoribosyl)-5-[(5-phosphoribosylamino)methylideneamino] imidazole-4-carboxamide isomerase (245 aa).

Aspartate 8 functions as the Proton acceptor in the catalytic mechanism. Residue aspartate 129 is the Proton donor of the active site.

This sequence belongs to the HisA/HisF family.

It localises to the cytoplasm. It carries out the reaction 1-(5-phospho-beta-D-ribosyl)-5-[(5-phospho-beta-D-ribosylamino)methylideneamino]imidazole-4-carboxamide = 5-[(5-phospho-1-deoxy-D-ribulos-1-ylimino)methylamino]-1-(5-phospho-beta-D-ribosyl)imidazole-4-carboxamide. Its pathway is amino-acid biosynthesis; L-histidine biosynthesis; L-histidine from 5-phospho-alpha-D-ribose 1-diphosphate: step 4/9. This Rhodopseudomonas palustris (strain HaA2) protein is 1-(5-phosphoribosyl)-5-[(5-phosphoribosylamino)methylideneamino] imidazole-4-carboxamide isomerase.